Here is a 343-residue protein sequence, read N- to C-terminus: Uroporphyrinogen decarboxylase (343 aa).

Substrate contacts are provided by residues 23-27 (RQAGR), Asp-73, Tyr-150, Ser-205, and His-322.

The protein belongs to the uroporphyrinogen decarboxylase family. Homodimer.

It localises to the cytoplasm. It catalyses the reaction uroporphyrinogen III + 4 H(+) = coproporphyrinogen III + 4 CO2. It participates in porphyrin-containing compound metabolism; protoporphyrin-IX biosynthesis; coproporphyrinogen-III from 5-aminolevulinate: step 4/4. Functionally, catalyzes the decarboxylation of four acetate groups of uroporphyrinogen-III to yield coproporphyrinogen-III. The sequence is that of Uroporphyrinogen decarboxylase from Cereibacter sphaeroides (strain KD131 / KCTC 12085) (Rhodobacter sphaeroides).